Here is a 458-residue protein sequence, read N- to C-terminus: Methylenetetrahydrofolate--tRNA-(uracil-5-)-methyltransferase TrmFO (458 aa).

12–17 (GAGLAG) contacts FAD.

Belongs to the MnmG family. TrmFO subfamily. Requires FAD as cofactor.

Its subcellular location is the cytoplasm. It carries out the reaction uridine(54) in tRNA + (6R)-5,10-methylene-5,6,7,8-tetrahydrofolate + NADH + H(+) = 5-methyluridine(54) in tRNA + (6S)-5,6,7,8-tetrahydrofolate + NAD(+). The enzyme catalyses uridine(54) in tRNA + (6R)-5,10-methylene-5,6,7,8-tetrahydrofolate + NADPH + H(+) = 5-methyluridine(54) in tRNA + (6S)-5,6,7,8-tetrahydrofolate + NADP(+). In terms of biological role, catalyzes the folate-dependent formation of 5-methyl-uridine at position 54 (M-5-U54) in all tRNAs. The protein is Methylenetetrahydrofolate--tRNA-(uracil-5-)-methyltransferase TrmFO of Deinococcus geothermalis (strain DSM 11300 / CIP 105573 / AG-3a).